The following is a 143-amino-acid chain: Small ribosomal subunit protein eS6 (143 aa).

This sequence belongs to the eukaryotic ribosomal protein eS6 family.

This is Small ribosomal subunit protein eS6 from Methanoregula boonei (strain DSM 21154 / JCM 14090 / 6A8).